Consider the following 410-residue polypeptide: Lipoyl synthase, mitochondrial (410 aa).

Residues 1-29 (MASTTVCSAARIRVASSQVLRSIANTRTY) constitute a mitochondrion transit peptide. Over residues 29-39 (YATTSPESSIP) the composition is skewed to polar residues. Residues 29–49 (YATTSPESSIPETKPTAKRTP) form a disordered region. [4Fe-4S] cluster is bound by residues Cys-129, Cys-134, Cys-140, Cys-160, Cys-164, Cys-167, and Ser-375. A Radical SAM core domain is found at 143–364 (GGSKAAATAT…KEKAMEMGFL (222 aa)).

The protein belongs to the radical SAM superfamily. Lipoyl synthase family. The cofactor is [4Fe-4S] cluster.

The protein localises to the mitochondrion. It catalyses the reaction [[Fe-S] cluster scaffold protein carrying a second [4Fe-4S](2+) cluster] + N(6)-octanoyl-L-lysyl-[protein] + 2 oxidized [2Fe-2S]-[ferredoxin] + 2 S-adenosyl-L-methionine + 4 H(+) = [[Fe-S] cluster scaffold protein] + N(6)-[(R)-dihydrolipoyl]-L-lysyl-[protein] + 4 Fe(3+) + 2 hydrogen sulfide + 2 5'-deoxyadenosine + 2 L-methionine + 2 reduced [2Fe-2S]-[ferredoxin]. It participates in protein modification; protein lipoylation via endogenous pathway; protein N(6)-(lipoyl)lysine from octanoyl-[acyl-carrier-protein]: step 2/2. Functionally, catalyzes the radical-mediated insertion of two sulfur atoms into the C-6 and C-8 positions of the octanoyl moiety bound to the lipoyl domains of lipoate-dependent enzymes, thereby converting the octanoylated domains into lipoylated derivatives. The protein is Lipoyl synthase, mitochondrial of Arthroderma otae (strain ATCC MYA-4605 / CBS 113480) (Microsporum canis).